The primary structure comprises 579 residues: Tricyclene synthase 0e23, chloroplastic (579 aa).

A chloroplast-targeting transit peptide spans 1–66; the sequence is MAFCISYLGA…ALCLNAHSTS (66 aa). Residues N27, N204, and N317 are each glycosylated (N-linked (GlcNAc...) asparagine). Mg(2+) contacts are provided by D336 and D340. Residues 336–340 carry the DDXXD motif motif; the sequence is DDIFD. N382 and N463 each carry an N-linked (GlcNAc...) asparagine glycan. Residues N480 and E488 each coordinate Mg(2+). A glycan (N-linked (GlcNAc...) asparagine) is linked at N507.

The protein belongs to the terpene synthase family. Tpsg subfamily. Requires Mg(2+) as cofactor. It depends on Mn(2+) as a cofactor. As to expression, accumulates in flowers; mostly expressed in both upper and lower petal lobes, and, to a lower extent, in tube and stamens.

The protein resides in the plastid. It localises to the chloroplast stroma. It catalyses the reaction (2E)-geranyl diphosphate = tricyclene + diphosphate. The catalysed reaction is (2E)-geranyl diphosphate = (E)-beta-ocimene + diphosphate. The protein operates within secondary metabolite biosynthesis; terpenoid biosynthesis. Its function is as follows. Contributes to floral scent emission. This chain is Tricyclene synthase 0e23, chloroplastic (0e23), found in Antirrhinum majus (Garden snapdragon).